Reading from the N-terminus, the 499-residue chain is Protein flp (499 aa).

4 consecutive transmembrane segments (helical) span residues 6 to 26, 389 to 409, 433 to 453, and 471 to 491; these read LYFLSISIIILVAISIAIYIT, FNIVTVLMTTLILLAFIFSAY, LTLCLCIAIALILYALPYLIL, and LTLTTAFIALFSMLITLLLIL.

The protein localises to the cell membrane. In terms of biological role, its precise function is unknown. Has no penicillin-binding activity and is not involved in methicillin resistance. This is Protein flp (flp) from Staphylococcus aureus (strain MRSA252).